Consider the following 31-residue polypeptide: MNVSSRTVVLINFFAAVGLFTLISMRFGWFI.

Residues 7 to 29 form a helical membrane-spanning segment; sequence TVVLINFFAAVGLFTLISMRFGW.

It is found in the cell inner membrane. This is an uncharacterized protein from Escherichia coli (strain K12).